The chain runs to 442 residues: Glutamate--methylamine ligase (442 aa).

In terms of domain architecture, GS beta-grasp spans 13 to 97 (NQVKYILAQF…IACDGHTHGK (85 aa)). In terms of domain architecture, GS catalytic spans 103 to 442 (TRVVLKKQLE…WEVNSYLEFF (340 aa)).

The protein belongs to the glutamine synthetase family. Type 3 subfamily. Mg(2+) serves as cofactor.

It carries out the reaction methylamine + L-glutamate + ATP = N(5)-methyl-L-glutamine + ADP + phosphate + H(+). In terms of biological role, catalyzes the formation of N(5)-methyl-L-glutamine from glutamate and methylamine. The sequence is that of Glutamate--methylamine ligase from Methyloversatilis universalis (strain ATCC BAA-1314 / DSM 25237 / JCM 13912 / CCUG 52030 / FAM5).